The sequence spans 361 residues: S-adenosylmethionine:tRNA ribosyltransferase-isomerase (361 aa).

It belongs to the QueA family. In terms of assembly, monomer.

The protein localises to the cytoplasm. It carries out the reaction 7-aminomethyl-7-carbaguanosine(34) in tRNA + S-adenosyl-L-methionine = epoxyqueuosine(34) in tRNA + adenine + L-methionine + 2 H(+). It functions in the pathway tRNA modification; tRNA-queuosine biosynthesis. Its function is as follows. Transfers and isomerizes the ribose moiety from AdoMet to the 7-aminomethyl group of 7-deazaguanine (preQ1-tRNA) to give epoxyqueuosine (oQ-tRNA). In Methylocella silvestris (strain DSM 15510 / CIP 108128 / LMG 27833 / NCIMB 13906 / BL2), this protein is S-adenosylmethionine:tRNA ribosyltransferase-isomerase.